The following is a 276-amino-acid chain: UPF0328 protein ECU03_0010 (276 aa).

Disordered stretches follow at residues 1–132 (MAAP…PIIS) and 156–176 (SFCQ…NMVH). Over residues 106–126 (HTEGCHTHEANPEPNTKHTET) the composition is skewed to basic and acidic residues.

This sequence belongs to the UPF0328 family.

This Encephalitozoon cuniculi (strain GB-M1) (Microsporidian parasite) protein is UPF0328 protein ECU03_0010.